The sequence spans 69 residues: Large ribosomal subunit protein bL31 (69 aa).

Zn(2+) contacts are provided by C17, C19, C37, and C40.

It belongs to the bacterial ribosomal protein bL31 family. Type A subfamily. As to quaternary structure, part of the 50S ribosomal subunit. Zn(2+) serves as cofactor.

In terms of biological role, binds the 23S rRNA. The polypeptide is Large ribosomal subunit protein bL31 (Thermoanaerobacter pseudethanolicus (strain ATCC 33223 / 39E) (Clostridium thermohydrosulfuricum)).